A 303-amino-acid chain; its full sequence is Glucose-1-phosphate thymidylyltransferase (303 aa).

Mg(2+) contacts are provided by Asp-108 and Asp-222.

It belongs to the glucose-1-phosphate thymidylyltransferase family. It depends on Mg(2+) as a cofactor.

The enzyme catalyses dTTP + alpha-D-glucose 1-phosphate + H(+) = dTDP-alpha-D-glucose + diphosphate. Functionally, catalyzes the formation of dTDP-glucose, from dTTP and glucose 1-phosphate, as well as its pyrophosphorolysis. Probably involved in the biosynthesis of the acarviose moiety of the alpha-glucosidase inhibitor acarbose. The sequence is that of Glucose-1-phosphate thymidylyltransferase (acbA) from Actinoplanes sp. (strain ATCC 31044 / CBS 674.73 / SE50/110).